The following is a 223-amino-acid chain: V-type ATP synthase subunit D (223 aa).

The tract at residues 203–223 (AREAEEEGGRPNPQVEIGAGL) is disordered.

This sequence belongs to the V-ATPase D subunit family.

Its function is as follows. Produces ATP from ADP in the presence of a proton gradient across the membrane. The chain is V-type ATP synthase subunit D from Thermus thermophilus (strain ATCC BAA-163 / DSM 7039 / HB27).